Reading from the N-terminus, the 376-residue chain is Na(+)/H(+) antiporter NhaA (376 aa).

Transmembrane regions (helical) follow at residues 8 to 28 (FLAT…AAML), 49 to 69 (LSLL…LVGL), 87 to 107 (ILPC…YLAF), 117 to 137 (GWAI…ALLG), 140 to 160 (APAS…MGAV), 162 to 182 (IIAL…AIVI), 209 to 229 (LAVL…ALAI), 248 to 268 (PWVA…VSFA), 270 to 290 (IGAE…LFLG), 321 to 341 (GVAL…GLAF), and 349 to 369 (EVKI…YALL).

The protein belongs to the NhaA Na(+)/H(+) (TC 2.A.33) antiporter family.

The protein resides in the cell inner membrane. It carries out the reaction Na(+)(in) + 2 H(+)(out) = Na(+)(out) + 2 H(+)(in). Functionally, na(+)/H(+) antiporter that extrudes sodium in exchange for external protons. This chain is Na(+)/H(+) antiporter NhaA, found in Rhizorhabdus wittichii (strain DSM 6014 / CCUG 31198 / JCM 15750 / NBRC 105917 / EY 4224 / RW1) (Sphingomonas wittichii).